The sequence spans 238 residues: Small ribosomal subunit protein uS3 (238 aa).

The KH type-2 domain maps to 39–108; sequence IRKFVKKKLF…NVAVNVIEVK (70 aa).

The protein belongs to the universal ribosomal protein uS3 family. As to quaternary structure, part of the 30S ribosomal subunit. Forms a tight complex with proteins S10 and S14.

Its function is as follows. Binds the lower part of the 30S subunit head. Binds mRNA in the 70S ribosome, positioning it for translation. The polypeptide is Small ribosomal subunit protein uS3 (Alkaliphilus oremlandii (strain OhILAs) (Clostridium oremlandii (strain OhILAs))).